Consider the following 380-residue polypeptide: Cytochrome b (380 aa).

4 consecutive transmembrane segments (helical) span residues 34–54 (FGSL…LLAA), 78–99 (WLIR…YMHI), 114–134 (WNTG…GYVL), and 179–199 (FFTL…IHLT). The heme b site is built by H84 and H98. 2 residues coordinate heme b: H183 and H197. Residue H202 participates in a ubiquinone binding. Transmembrane regions (helical) follow at residues 227–247 (LKDT…ALFS), 289–309 (LGGV…PLLH), 321–341 (LSQL…WVGS), and 348–368 (FIII…ILFP).

It belongs to the cytochrome b family. As to quaternary structure, the cytochrome bc1 complex contains 11 subunits: 3 respiratory subunits (MT-CYB, CYC1 and UQCRFS1), 2 core proteins (UQCRC1 and UQCRC2) and 6 low-molecular weight proteins (UQCRH/QCR6, UQCRB/QCR7, UQCRQ/QCR8, UQCR10/QCR9, UQCR11/QCR10 and a cleavage product of UQCRFS1). This cytochrome bc1 complex then forms a dimer. Heme b serves as cofactor.

The protein localises to the mitochondrion inner membrane. Its function is as follows. Component of the ubiquinol-cytochrome c reductase complex (complex III or cytochrome b-c1 complex) that is part of the mitochondrial respiratory chain. The b-c1 complex mediates electron transfer from ubiquinol to cytochrome c. Contributes to the generation of a proton gradient across the mitochondrial membrane that is then used for ATP synthesis. The protein is Cytochrome b (MT-CYB) of Balearica regulorum (Grey crowned-crane).